The primary structure comprises 324 residues: Probable fructokinase-5 (324 aa).

The protein belongs to the carbohydrate kinase PfkB family.

The enzyme catalyses D-fructose + ATP = D-fructose 6-phosphate + ADP + H(+). It participates in glycan biosynthesis; starch biosynthesis. Its function is as follows. May play an important role in maintaining the flux of carbon towards starch formation. In Arabidopsis thaliana (Mouse-ear cress), this protein is Probable fructokinase-5.